Consider the following 62-residue polypeptide: Short neurotoxin C (62 aa).

A compositionally biased stretch (polar residues) spans 1–16 (RRCFNQQSSQPQTNKS). Residues 1-22 (RRCFNQQSSQPQTNKSCPPGEN) are disordered. Cystine bridges form between cysteine 3/cysteine 24, cysteine 17/cysteine 41, cysteine 43/cysteine 54, and cysteine 55/cysteine 60.

The protein belongs to the three-finger toxin family. Short-chain subfamily. Type I alpha-neurotoxin sub-subfamily. As to expression, expressed by the venom gland.

The protein resides in the secreted. Its function is as follows. Binds to muscle nicotinic acetylcholine receptor (nAChR) and inhibit acetylcholine from binding to the receptor, thereby impairing neuromuscular transmission. In Laticauda laticaudata (Blue-ringed sea krait), this protein is Short neurotoxin C.